The chain runs to 357 residues: Heat-inducible transcription repressor HrcA (357 aa).

Belongs to the HrcA family.

Negative regulator of class I heat shock genes (grpE-dnaK-dnaJ and groELS operons). Prevents heat-shock induction of these operons. The sequence is that of Heat-inducible transcription repressor HrcA from Chlorobium phaeobacteroides (strain DSM 266 / SMG 266 / 2430).